A 236-amino-acid polypeptide reads, in one-letter code: Small ribosomal subunit protein uS2c (236 aa).

This sequence belongs to the universal ribosomal protein uS2 family.

The protein localises to the plastid. The protein resides in the chloroplast. The chain is Small ribosomal subunit protein uS2c (rps2) from Lemna minor (Common duckweed).